A 459-amino-acid polypeptide reads, in one-letter code: Beta-glucosidase (459 aa).

The Proton donor role is filled by E171. Catalysis depends on E359, which acts as the Nucleophile.

The protein belongs to the glycosyl hydrolase 1 family.

It catalyses the reaction Hydrolysis of terminal, non-reducing beta-D-glucosyl residues with release of beta-D-glucose.. The sequence is that of Beta-glucosidase (abg) from Agrobacterium sp. (strain ATCC 21400).